The chain runs to 210 residues: MADWKNLTQAVGDLEEDDVMEILNDFVATNPTEAEAEEAVAACQAGMAVVGDLFEEGEYFVGDLIFAGELLTEAINVLKPVLGSGDTAVAGTILIGTAHGDLHDIGKNIFRSMAEAAGFQVTDLGIDVAIDTFVEKAKEIKPDIIGISGVLTLAIDSMKETSDALKAAGVDSKLIIGGNPVTKEACEYVGADDFTTNAAEGVKICQAWVG.

A B12-binding N-terminal domain is found at 1-90 (MADWKNLTQA…VLGSGDTAVA (90 aa)). The region spanning 90–210 (AGTILIGTAH…GVKICQAWVG (121 aa)) is the B12-binding domain. A methylcob(III)alamin-binding site is contributed by His-103.

It belongs to the methylamine corrinoid protein family. The proline betaine:THF methyl transfer system is composed of two methyltransferases, MtpB and MtqA, and the corrinoid protein MtqC. The L-carnitine:THF methyl transfer system is composed of two methyltransferases, MtcB and MtqA, and the corrinoid protein MtqC.

In terms of biological role, involved in the degradation of the quaternary amines L-proline betaine and L-carnitine. Component of a corrinoid-dependent methyltransferase system that transfers a methyl group from L-proline betaine or L-carnitine to tetrahydrofolate (THF), forming methyl-THF, a key intermediate in the Wood-Ljungdahl acetogenesis pathway. Acts as a methyl group carrier between MtpB or MtcB, and MtqA. A methyl group from L-proline betaine or L-carnitine is first transferred to the corrinoid prosthetic group of MtqC by MtpB or MtcB, respectively, and then transferred from MtqC to THF by MtqA. The polypeptide is Quaternary-amine-specific corrinoid protein (Eubacterium limosum).